The following is a 138-amino-acid chain: Proline-rich protein 34 (138 aa).

Residues 22–37 (SAPTSPPNPATRPAPG) show a composition bias toward pro residues. 2 disordered regions span residues 22 to 55 (SAPT…PTRG) and 81 to 107 (APRL…SPAR).

This Homo sapiens (Human) protein is Proline-rich protein 34 (PRR34).